The sequence spans 491 residues: MRSSLAPGIWYRAFILLITFLIYTCYHMSRKPISVVKSRLHHNCSEVIQPVNSTHSLNDTTWCNWAPFDKSNYKELLGAVDNAFLVAYAIGMFISGIFGERLPLRYYLTAGMLLSGLFTSLFGLGYFWNIHVLWYFVLVQIFNGLVQTTGWPAVVSCVGNWFGKGKRGLIMGIWNSHTSVGNILGSLLAGVWVDQQWGLSFVVPGVITAIMGIITFFFLIEYPEDVDCSPPQHHGNPEESQDQPEDPANGPSCNKESSLESAVTCSKEASAQPSAISFFGALRIPGVVEFSLCLLFAKLVSYTFLYWLPLYISNVVHFTAKEAGDLSTLFDVGGIIGGILAGLVSDYINGRATTCCVMLILAAPMMFLYNHVGQRGIGISIVMLLICGALVNGPYALITTAVSADLGTHKSLKGNAKALSTVTAIIDGTGSIGAALGPLLAGLISPTGWNNVFYMLIAADVLACLLLCRLVYKEILAWKSSLSKDRGYREM.

A helical transmembrane segment spans residues 5 to 25; sequence LAPGIWYRAFILLITFLIYTC. 3 N-linked (GlcNAc...) asparagine glycosylation sites follow: asparagine 43, asparagine 52, and asparagine 58. 5 consecutive transmembrane segments (helical) span residues 78 to 98, 108 to 130, 132 to 154, 169 to 189, and 200 to 220; these read GAVDNAFLVAYAIGMFISGIF, LTAGMLLSGLFTSLFGLGYFWNI, VLWYFVLVQIFNGLVQTTGWPAV, LIMGIWNSHTSVGNILGSLLA, and SFVVPGVITAIMGIITFFFLI. The tract at residues 229 to 257 is disordered; the sequence is SPPQHHGNPEESQDQPEDPANGPSCNKES. Transmembrane regions (helical) follow at residues 292-312, 328-348, 352-372, 377-397, 424-444, and 452-472; these read LCLLFAKLVSYTFLYWLPLYI, TLFDVGGIIGGILAGLVSDYI, ATTCCVMLILAAPMMFLYNHV, IGISIVMLLICGALVNGPYAL, AIIDGTGSIGAALGPLLAGLI, and VFYMLIAADVLACLLLCRLVY.

This sequence belongs to the major facilitator superfamily. Organophosphate:Pi antiporter (OPA) (TC 2.A.1.4) family.

The protein localises to the endoplasmic reticulum membrane. The catalysed reaction is D-glucose 6-phosphate(in) + phosphate(out) = D-glucose 6-phosphate(out) + phosphate(in). Inhibited by vanadate but not by chlorogenic acid. Inorganic phosphate and glucose-6-phosphate antiporter. May transport cytoplasmic glucose-6-phosphate into the lumen of the endoplasmic reticulum and translocate inorganic phosphate into the opposite direction. Independent of a lumenal glucose-6-phosphatase. May not play a role in homeostatic regulation of blood glucose levels. The protein is Glucose-6-phosphate exchanger SLC37A2 of Bos taurus (Bovine).